Here is a 688-residue protein sequence, read N- to C-terminus: PTS system glucoside-specific EIICBA component (688 aa).

The PTS EIIC type-1 domain maps to Lys-3–Asp-427. 10 helical membrane passes run Ile-12–Phe-32, Leu-81–Met-101, Leu-137–Leu-157, Phe-182–Trp-202, Leu-223–Ile-243, Ala-284–Ile-304, Val-315–Pro-335, Phe-340–Leu-360, Leu-364–Gly-384, and Leu-395–Ile-415. A PTS EIIB type-1 domain is found at Ala-438–Lys-519. The Phosphocysteine intermediate; for EIIB activity role is filled by Cys-460. The PTS EIIA type-1 domain occupies Asp-560–Asn-664. Catalysis depends on His-612, which acts as the Tele-phosphohistidine intermediate; for EIIA activity.

The protein resides in the cell membrane. The phosphoenolpyruvate-dependent sugar phosphotransferase system (sugar PTS), a major carbohydrate active -transport system, catalyzes the phosphorylation of incoming sugar substrates concomitantly with their translocation across the cell membrane. This system is involved in alpha- and beta-glucoside transport. The polypeptide is PTS system glucoside-specific EIICBA component (glcB) (Staphylococcus aureus (strain Mu3 / ATCC 700698)).